The primary structure comprises 156 residues: SsrA-binding protein (156 aa).

The protein belongs to the SmpB family.

It is found in the cytoplasm. Functionally, required for rescue of stalled ribosomes mediated by trans-translation. Binds to transfer-messenger RNA (tmRNA), required for stable association of tmRNA with ribosomes. tmRNA and SmpB together mimic tRNA shape, replacing the anticodon stem-loop with SmpB. tmRNA is encoded by the ssrA gene; the 2 termini fold to resemble tRNA(Ala) and it encodes a 'tag peptide', a short internal open reading frame. During trans-translation Ala-aminoacylated tmRNA acts like a tRNA, entering the A-site of stalled ribosomes, displacing the stalled mRNA. The ribosome then switches to translate the ORF on the tmRNA; the nascent peptide is terminated with the 'tag peptide' encoded by the tmRNA and targeted for degradation. The ribosome is freed to recommence translation, which seems to be the essential function of trans-translation. The protein is SsrA-binding protein of Bacillus pumilus (strain SAFR-032).